The following is a 259-amino-acid chain: Envelope biogenesis factor ElyC (259 aa).

A run of 2 helical transmembrane segments spans residues 12-32 and 39-59; these read MLLPLPLMLLIIGAGLALLWF and GKIFISIGWLALLLLSLQPVA.

It is found in the cell inner membrane. Its function is as follows. Plays a critical role in the metabolism of the essential lipid carrier used for cell wall synthesis. The sequence is that of Envelope biogenesis factor ElyC (elyC) from Escherichia coli O157:H7.